Reading from the N-terminus, the 789-residue chain is Phenylalanine--tRNA ligase beta subunit (789 aa).

One can recognise a tRNA-binding domain in the interval 38–151; the sequence is KKHLQSFVVV…NTYNVGESFF (114 aa). In terms of domain architecture, B5 spans 398 to 474; it reads HNDILLNFSP…RLYGYDKILE (77 aa). Aspartate 452, aspartate 458, glutamate 461, and glutamate 462 together coordinate Mg(2+). Residues 694–787 enclose the FDX-ACB domain; it reads LRYQSVKRDF…ISKGFNGILR (94 aa).

The protein belongs to the phenylalanyl-tRNA synthetase beta subunit family. Type 1 subfamily. In terms of assembly, tetramer of two alpha and two beta subunits. Requires Mg(2+) as cofactor.

Its subcellular location is the cytoplasm. The enzyme catalyses tRNA(Phe) + L-phenylalanine + ATP = L-phenylalanyl-tRNA(Phe) + AMP + diphosphate + H(+). This Ehrlichia ruminantium (strain Welgevonden) protein is Phenylalanine--tRNA ligase beta subunit.